Reading from the N-terminus, the 820-residue chain is Leucine--tRNA ligase (820 aa).

The short motif at 42–52 (PYPSGDLHMGH) is the 'HIGH' region element. The short motif at 576-580 (KMSKS) is the 'KMSKS' region element. An ATP-binding site is contributed by K579.

The protein belongs to the class-I aminoacyl-tRNA synthetase family.

It is found in the cytoplasm. It carries out the reaction tRNA(Leu) + L-leucine + ATP = L-leucyl-tRNA(Leu) + AMP + diphosphate. The sequence is that of Leucine--tRNA ligase from Coxiella burnetii (strain RSA 493 / Nine Mile phase I).